We begin with the raw amino-acid sequence, 569 residues long: Urease subunit alpha (569 aa).

The Urease domain maps to 132 to 569; sequence GGVDTHIHFI…VPLGQRYFLF (438 aa). 3 residues coordinate Ni(2+): His137, His139, and Lys220. An N6-carboxylysine modification is found at Lys220. His222 is a binding site for substrate. His249 and His275 together coordinate Ni(2+). His323 functions as the Proton donor in the catalytic mechanism. Asp363 serves as a coordination point for Ni(2+).

The protein belongs to the metallo-dependent hydrolases superfamily. Urease alpha subunit family. Heterotrimer of UreA (gamma), UreB (beta) and UreC (alpha) subunits. Three heterotrimers associate to form the active enzyme. Ni cation serves as cofactor. Post-translationally, carboxylation allows a single lysine to coordinate two nickel ions.

Its subcellular location is the cytoplasm. The enzyme catalyses urea + 2 H2O + H(+) = hydrogencarbonate + 2 NH4(+). It participates in nitrogen metabolism; urea degradation; CO(2) and NH(3) from urea (urease route): step 1/1. In Bacillus subtilis (strain 168), this protein is Urease subunit alpha.